The sequence spans 238 residues: ATP synthase subunit a (238 aa).

5 helical membrane-spanning segments follow: residues 15-35 (IFNLTMLAMTLLIVGVIFVFI), 76-96 (YSLFFLCLFLFMVIANNLGLM), 111-131 (PTANLQYDLTLSFLVILLTHI), 167-187 (LALRIFGNIFAGEVMTSLLLL), and 208-230 (AFSVFISCIQAYVFTLLTSVYLG).

Belongs to the ATPase A chain family. F-type ATPases have 2 components, CF(1) - the catalytic core - and CF(0) - the membrane proton channel. CF(1) has five subunits: alpha(3), beta(3), gamma(1), delta(1), epsilon(1). CF(0) has three main subunits: a(1), b(2) and c(9-12). The alpha and beta chains form an alternating ring which encloses part of the gamma chain. CF(1) is attached to CF(0) by a central stalk formed by the gamma and epsilon chains, while a peripheral stalk is formed by the delta and b chains.

It localises to the cell membrane. In terms of biological role, key component of the proton channel; it plays a direct role in the translocation of protons across the membrane. The protein is ATP synthase subunit a of Streptococcus pneumoniae (strain ATCC BAA-255 / R6).